A 476-amino-acid polypeptide reads, in one-letter code: Lipase (476 aa).

Residues 1–23 (MGIFDYKNLGTEGSKTLFADAMA) form the signal peptide. The active-site Charge relay system is the S207. Hemolysin-type calcium-binding repeat units lie at residues 372–389 (IGSD…ADFI), 390–407 (EGGK…HNTF), and 410–427 (SGHF…TDKL). The Ca(2+) site is built by D437, D440, and D448.

This sequence belongs to the AB hydrolase superfamily. Lipase family.

The catalysed reaction is a triacylglycerol + H2O = a diacylglycerol + a fatty acid + H(+). This chain is Lipase, found in Pseudomonas fluorescens.